The chain runs to 138 residues: Small ribosomal subunit protein uS11c (138 aa).

Residues 1-22 form a disordered region; the sequence is MAKPILRIGSRKNTRSGSRKNV. Residues 9-22 show a composition bias toward basic residues; it reads GSRKNTRSGSRKNV.

The protein belongs to the universal ribosomal protein uS11 family. Part of the 30S ribosomal subunit.

Its subcellular location is the plastid. The protein localises to the chloroplast. This chain is Small ribosomal subunit protein uS11c, found in Arabis hirsuta (Hairy rock-cress).